A 79-amino-acid chain; its full sequence is ATP synthase subunit c (79 aa).

2 consecutive transmembrane segments (helical) span residues 11 to 31 (MAAAIMMGLAAIGAAIGIGIL) and 53 to 73 (FFIVMGLVDAIPMIAVGLGLY).

This sequence belongs to the ATPase C chain family. In terms of assembly, F-type ATPases have 2 components, F(1) - the catalytic core - and F(0) - the membrane proton channel. F(1) has five subunits: alpha(3), beta(3), gamma(1), delta(1), epsilon(1). F(0) has three main subunits: a(1), b(2) and c(10-14). The alpha and beta chains form an alternating ring which encloses part of the gamma chain. F(1) is attached to F(0) by a central stalk formed by the gamma and epsilon chains, while a peripheral stalk is formed by the delta and b chains.

It localises to the cell inner membrane. Its function is as follows. F(1)F(0) ATP synthase produces ATP from ADP in the presence of a proton or sodium gradient. F-type ATPases consist of two structural domains, F(1) containing the extramembraneous catalytic core and F(0) containing the membrane proton channel, linked together by a central stalk and a peripheral stalk. During catalysis, ATP synthesis in the catalytic domain of F(1) is coupled via a rotary mechanism of the central stalk subunits to proton translocation. Key component of the F(0) channel; it plays a direct role in translocation across the membrane. A homomeric c-ring of between 10-14 subunits forms the central stalk rotor element with the F(1) delta and epsilon subunits. In Yersinia enterocolitica serotype O:8 / biotype 1B (strain NCTC 13174 / 8081), this protein is ATP synthase subunit c.